A 950-amino-acid polypeptide reads, in one-letter code: Serine/threonine-protein phosphatase 4 regulatory subunit 1 (950 aa).

HEAT repeat units lie at residues 1-25 (MADLSLLQEDLQEDADGFGVDDYSS), 26-63 (ESDVIIIPSALDFVSQDEMLTPLGRLDKYAASENIFNR), 65-81 (MVARSLLDTLREVCDDE), 82-119 (RDCIAVLERISRLADDSEPTVRAELMEQVPHIALFCQE), 127-164 (AFSKFLLPIVVRYLADQNNQVRKTSQAALLALLEQELI), 168-206 (DVETKVCPVLIELTAPDSNDDVKTEAVAIMCKMAPMVGK), 208-246 (ITERLILPRFCEMCCDCRMFHVRKVCAANFGDICSVVGQ), 248-285 (ATEEMLLPRFFQLCSDNVWGVRKACAECFMAVSCATCQ), and 287-324 (IRRTKLSALFINLISDPSRWVRQAAFQSLGPFISTFAN). 3 disordered regions span residues 326-374 (SSSG…SVSN), 413-438 (ESHQEAASNENDKKPGNYKSMLRPEV), and 473-499 (EQNSGGKPSPEGPEEESEGPVPSSPNI). Basic and acidic residues predominate over residues 332–365 (FKEESKSSEEMSVENKNRTRDQEAPEDVQVRPED). HEAT repeat units follow at residues 505 to 542 (KELEEMIENLEPHIDDPDVKAQVEVLSAALRASSLDAH), 568 to 606 (INQEDSVPLISDAVENMDSTLHYIHSDSDLSNNSSFSPD), 698 to 734 (LTAADLVPIFNGFLKDLDEVRIGVLKHLHDFLKLLHI), 799 to 837 (WISYKLVSEMVKKLHAATPPTFGVDLINELVENFGRCPK), and 861 to 898 (QFAVHLMPHLLTLANDRVPNVRVLLAKTLRQTLLEKDY). Ser-935 carries the post-translational modification Phosphoserine.

In terms of assembly, serine/threonine-protein phosphatase 4 (PP4) occurs in different assemblies of the catalytic and one or more regulatory subunits. Component of the PP4 complex PPP4C-PPP4R1. Interacts with HDAC3. As to quaternary structure, (Microbial infection) Interacts with merkel polyomavirus small tumor antigen; this interaction bridges small tumor antigen with NEMO to inhibit NF-kappa-B. In terms of tissue distribution, widely expressed with high expression in cultured mesangial cells. Isoform 1 and isoform 2 are expressed in renal tissues.

In terms of biological role, regulatory subunit of serine/threonine-protein phosphatase 4. May play a role in regulation of cell division in renal glomeruli. The PPP4C-PPP4R1 PP4 complex may play a role in dephosphorylation and regulation of HDAC3. Plays a role in the inhibition of TNF-induced NF-kappa-B activation by regulating the dephosphorylation of TRAF2. Functionally, (Microbial infection) Participates in merkel polyomavirus-mediated inhibition of NF-kappa-B by bridging viral small tumor antigen with NEMO. This Homo sapiens (Human) protein is Serine/threonine-protein phosphatase 4 regulatory subunit 1 (PPP4R1).